Here is a 131-residue protein sequence, read N- to C-terminus: Arsenate reductase (131 aa).

Residues Cys10, Cys82, and Cys89 each act as nucleophile in the active site. Cystine bridges form between Cys10/Cys82 and Cys82/Cys89.

The protein belongs to the low molecular weight phosphotyrosine protein phosphatase family. Thioredoxin-coupled ArsC subfamily.

Its subcellular location is the cytoplasm. The enzyme catalyses arsenate + [thioredoxin]-dithiol + H(+) = arsenite + [thioredoxin]-disulfide + H2O. Functionally, catalyzes the reduction of arsenate [As(V)] to arsenite [As(III)]. In Staphylococcus aureus (strain COL), this protein is Arsenate reductase.